Here is a 398-residue protein sequence, read N- to C-terminus: Succinate--CoA ligase [ADP-forming] subunit beta (398 aa).

The ATP-grasp domain occupies 9 to 254; sequence KAVLREFGVP…ETEEDAKEIE (246 aa). ATP is bound by residues K46, 53–55, E109, S112, and E117; that span reads GRG. Mg(2+)-binding residues include N209 and D223. Substrate-binding positions include N274 and 331–333; that span reads GIM.

The protein belongs to the succinate/malate CoA ligase beta subunit family. Heterotetramer of two alpha and two beta subunits. Requires Mg(2+) as cofactor.

The enzyme catalyses succinate + ATP + CoA = succinyl-CoA + ADP + phosphate. It carries out the reaction GTP + succinate + CoA = succinyl-CoA + GDP + phosphate. It functions in the pathway carbohydrate metabolism; tricarboxylic acid cycle; succinate from succinyl-CoA (ligase route): step 1/1. In terms of biological role, succinyl-CoA synthetase functions in the citric acid cycle (TCA), coupling the hydrolysis of succinyl-CoA to the synthesis of either ATP or GTP and thus represents the only step of substrate-level phosphorylation in the TCA. The beta subunit provides nucleotide specificity of the enzyme and binds the substrate succinate, while the binding sites for coenzyme A and phosphate are found in the alpha subunit. The polypeptide is Succinate--CoA ligase [ADP-forming] subunit beta (Rhodopseudomonas palustris (strain ATCC BAA-98 / CGA009)).